The chain runs to 173 residues: Photosystem I assembly protein Ycf3 (173 aa).

3 TPR repeats span residues 35–68 (AYVY…EDNP), 72–105 (GETL…NSNQ), and 120–153 (GRIA…NPGG).

The protein belongs to the Ycf3 family.

It localises to the cellular thylakoid membrane. Essential for the assembly of the photosystem I (PSI) complex. May act as a chaperone-like factor to guide the assembly of the PSI subunits. This is Photosystem I assembly protein Ycf3 from Parasynechococcus marenigrum (strain WH8102).